The primary structure comprises 231 residues: MEPNVVDHTSMWSLISNASIVVQLVMLTLVAASVTSWIMIFQRGNAMRAAKKALDAFEERFWSGIDLSKLYRQAGSNPDPDSGVEQIFRAGFKEFSRLRQQPGVDPDAVMEGVARAMRVAISREEEKLEASLPFLATVGSTSPYVGLFGTVWGIMNSFRGLATVQQATLATVAPGIAEALIATAIGLFAAIPAVIAYNRFSARSEMLIGRYYTFADEFQAILHRKVHTSDD.

3 helical membrane passes run 20-40 (IVVQ…WIMI), 134-154 (FLAT…VWGI), and 176-196 (IAEA…AVIA).

The protein belongs to the ExbB/TolQ family. In terms of assembly, the Tol-Pal system is composed of five core proteins: the inner membrane proteins TolA, TolQ and TolR, the periplasmic protein TolB and the outer membrane protein Pal. They form a network linking the inner and outer membranes and the peptidoglycan layer.

It localises to the cell inner membrane. Its function is as follows. Part of the Tol-Pal system, which plays a role in outer membrane invagination during cell division and is important for maintaining outer membrane integrity. This Pseudomonas aeruginosa (strain ATCC 15692 / DSM 22644 / CIP 104116 / JCM 14847 / LMG 12228 / 1C / PRS 101 / PAO1) protein is Tol-Pal system protein TolQ.